A 551-amino-acid chain; its full sequence is Harmonin (551 aa).

The interval 1–86 (MDRKVAREFR…LTPRRSRKLK (86 aa)) is N-terminal domain. PDZ domains are found at residues 87 to 169 (EVRL…HIGL) and 211 to 293 (KVFI…AGAG). Residues 194 to 532 (GGRSSLGSPG…QKAWNQGDWI (339 aa)) are mediates interaction with MYO7B. A Phosphoserine modification is found at Ser219. The stretch at 318–377 (LMQKRLAMESNKILQEQQEMERQRKKEIAQKAAEENERYRKEMEQIVEEEEKFRKQWEED) forms a coiled coil. A disordered region spans residues 401–425 (KPKYDLGVDPEFDPADDLDGGTNKR). The segment covering 408-419 (VDPEFDPADDLD) has biased composition (acidic residues). The region spanning 452-536 (DVRLLRVKKE…NQGDWIDLVV (85 aa)) is the PDZ 3 domain.

As to quaternary structure, part of the IMAC/intermicrovillar adhesion complex/intermicrovillar tip-link complex composed of ANKS4B, MYO7B, USH1C, CDHR2 and CDHR5. Part of a complex composed of USH1C, USH1G and MYO7A. Interacts with F-actin. Interacts with USH2A. Interacts with SLC4A7. Interacts (via PDZ1 domain) with the C-terminus of USHBP1. Interacts (via N-terminus and PDZ 2 domain) with CDH23. Interacts with USH1G. Interacts with MYO7B. Interacts with CDHR2 and CDHR5; may mediate their interaction with MYO7B at the microvilli tip. Interacts (via PDZ 1 domain) with ANKS4B. Interacts (via PDZ 1 domain) with DOCK4.

It localises to the cytoplasm. Its subcellular location is the cytosol. The protein resides in the cytoskeleton. It is found in the cell projection. The protein localises to the microvillus. Functionally, anchoring/scaffolding protein that is a part of the functional network formed by USH1C, USH1G, CDH23 and MYO7A that mediates mechanotransduction in cochlear hair cells. Required for normal development and maintenance of cochlear hair cell bundles. As part of the intermicrovillar adhesion complex/IMAC plays a role in brush border differentiation, controlling microvilli organization and length. Probably plays a central regulatory role in the assembly of the complex, recruiting CDHR2, CDHR5 and MYO7B to the microvilli tips. This chain is Harmonin (USH1C), found in Bos taurus (Bovine).